The following is a 327-amino-acid chain: Ribose 1,5-bisphosphate isomerase (327 aa).

Substrate is bound by residues 25–28 (RGAA) and Arg68. Cys133 (proton acceptor) is an active-site residue. Catalysis depends on Asp202, which acts as the Proton donor. Substrate-binding positions include 212-213 (NK) and Lys238.

Belongs to the eIF-2B alpha/beta/delta subunits family. R15P isomerase subfamily.

It catalyses the reaction alpha-D-ribose 1,5-bisphosphate = D-ribulose 1,5-bisphosphate. Isomerase involved in the non-carboxylating pentose bisphosphate pathway, a nucleoside degradation pathway present in some halophilic archaea. Catalyzes the isomerization of ribose 1,5-bisphosphate (R15P) to ribulose 1,5-bisphosphate (RuBP). This Haloterrigena turkmenica (strain ATCC 51198 / DSM 5511 / JCM 9101 / NCIMB 13204 / VKM B-1734 / 4k) (Halococcus turkmenicus) protein is Ribose 1,5-bisphosphate isomerase.